Reading from the N-terminus, the 480-residue chain is ATP synthase subunit beta (480 aa).

153 to 160 (GGAGVGKT) serves as a coordination point for ATP.

Belongs to the ATPase alpha/beta chains family. As to quaternary structure, F-type ATPases have 2 components, CF(1) - the catalytic core - and CF(0) - the membrane proton channel. CF(1) has five subunits: alpha(3), beta(3), gamma(1), delta(1), epsilon(1). CF(0) has three main subunits: a(1), b(2) and c(9-12). The alpha and beta chains form an alternating ring which encloses part of the gamma chain. CF(1) is attached to CF(0) by a central stalk formed by the gamma and epsilon chains, while a peripheral stalk is formed by the delta and b chains.

Its subcellular location is the cell membrane. The enzyme catalyses ATP + H2O + 4 H(+)(in) = ADP + phosphate + 5 H(+)(out). Functionally, produces ATP from ADP in the presence of a proton gradient across the membrane. The catalytic sites are hosted primarily by the beta subunits. This Lactobacillus johnsonii (strain CNCM I-12250 / La1 / NCC 533) protein is ATP synthase subunit beta.